Reading from the N-terminus, the 246-residue chain is Glucosamine-6-phosphate deaminase (246 aa).

The active-site Proton acceptor; for enolization step is Asp-67. Asn-136 (for ring-opening step) is an active-site residue. The active-site Proton acceptor; for ring-opening step is His-138. The For ring-opening step role is filled by Glu-143.

Belongs to the glucosamine/galactosamine-6-phosphate isomerase family. NagB subfamily.

The catalysed reaction is alpha-D-glucosamine 6-phosphate + H2O = beta-D-fructose 6-phosphate + NH4(+). The protein operates within amino-sugar metabolism; N-acetylneuraminate degradation; D-fructose 6-phosphate from N-acetylneuraminate: step 5/5. In terms of biological role, catalyzes the reversible isomerization-deamination of glucosamine 6-phosphate (GlcN6P) to form fructose 6-phosphate (Fru6P) and ammonium ion. In Halalkalibacterium halodurans (strain ATCC BAA-125 / DSM 18197 / FERM 7344 / JCM 9153 / C-125) (Bacillus halodurans), this protein is Glucosamine-6-phosphate deaminase.